Reading from the N-terminus, the 362-residue chain is B3 domain-containing protein IDEF1 (362 aa).

Residues 30–91 (VPFPNPFPAP…TPTPTPRGFA (62 aa)) are disordered. Over residues 48 to 70 (PHNHNHNHNHNHNIHNSHNHNHN) the composition is skewed to basic residues. Positions 253–355 (LRKELTKSDV…KFIIRGEKAI (103 aa)) form a DNA-binding region, TF-B3.

In terms of processing, polyubiquitinated. Ubiquitination leads to its subsequent degradation via the proteasome pathway. Expressed in roots.

It localises to the nucleus. Its function is as follows. Transcription regulator involved in iron deficiency response and tolerance. May regulate directly iron transporters or other transcription factors involved in iron-deficiency response. Binds specifically to the DNA sequence 5'-CATGC-3' of the IDE1 element found in the promoter of the barley iron deficiency-inducible gene IDS2. The chain is B3 domain-containing protein IDEF1 (IDEF1) from Oryza sativa subsp. japonica (Rice).